A 61-amino-acid chain; its full sequence is Sperm protamine P1 (61 aa).

Residues 1–61 (MARYRHSRSR…RRYSRRRRRY (61 aa)) are disordered.

Belongs to the protamine P1 family. In terms of tissue distribution, testis.

Its subcellular location is the nucleus. It is found in the chromosome. Protamines substitute for histones in the chromatin of sperm during the haploid phase of spermatogenesis. They compact sperm DNA into a highly condensed, stable and inactive complex. This chain is Sperm protamine P1 (PRM1), found in Potorous longipes (Long-footed potoroo).